The following is a 402-amino-acid chain: CinA-like protein (402 aa).

The protein belongs to the CinA family.

In Fusobacterium nucleatum subsp. nucleatum (strain ATCC 25586 / DSM 15643 / BCRC 10681 / CIP 101130 / JCM 8532 / KCTC 2640 / LMG 13131 / VPI 4355), this protein is CinA-like protein.